A 180-amino-acid chain; its full sequence is UPF0743 protein C215.06c (180 aa).

2 C2HC LYAR-type zinc fingers span residues 1–26 and 27–51; these read MVSFCCEVCQDIIKKPKLDQHRSRCH and GAYFTCIDCNTTFERTDYRNHTSCM. 8 residues coordinate Zn(2+): C6, C9, H21, C25, C32, C35, H47, and C50. The interval 61–125 is disordered; the sequence is LYRPTKKELK…KETVSSPAEQ (65 aa). Positions 77–95 are enriched in polar residues; that stretch reads NAVNSKELSPNTDNQNTPA. S85 is modified (phosphoserine). Over residues 100–111 the composition is skewed to basic and acidic residues; sequence HSLDENEKDKEN.

Belongs to the UPF0743 family.

Its subcellular location is the nucleus. This Schizosaccharomyces pombe (strain 972 / ATCC 24843) (Fission yeast) protein is UPF0743 protein C215.06c.